Here is a 1768-residue protein sequence, read N- to C-terminus: Maestro heat-like repeat-containing protein family member 1 homolog (1768 aa).

HEAT repeat units lie at residues 4 to 47, 164 to 203, 816 to 856, 1166 to 1204, 1483 to 1521, and 1731 to 1768; these read TSQV…HQPN, VHNP…AICS, QRLQ…AVHP, QSQM…ARGA, EQLL…CSST, and TISR…HDFH.

The protein belongs to the MROH1 family. Homooligomer; homooligomerizes at lysosome scission sites.

The protein localises to the lysosome membrane. Lysosome fission factor. Recruited to lysosomes by rab-7 at scission sites and homooligomerizes to mediate the constriction and scission of lysosomal tubules. May sever membranes by inserting amphipathic helices into one bilayer leaflet. Lysosome fission is required to maintain their steady-state number, shape, size, composition and function, and to accomplish regeneration. This Caenorhabditis elegans protein is Maestro heat-like repeat-containing protein family member 1 homolog.